The chain runs to 208 residues: Large ribosomal subunit protein uL3 (208 aa).

Residue Gln149 is modified to N5-methylglutamine.

The protein belongs to the universal ribosomal protein uL3 family. As to quaternary structure, part of the 50S ribosomal subunit. Forms a cluster with proteins L14 and L19. Post-translationally, methylated by PrmB.

One of the primary rRNA binding proteins, it binds directly near the 3'-end of the 23S rRNA, where it nucleates assembly of the 50S subunit. The polypeptide is Large ribosomal subunit protein uL3 (Mannheimia succiniciproducens (strain KCTC 0769BP / MBEL55E)).